The following is a 699-amino-acid chain: Endogenous retrovirus group K member 113 Env polyprotein (699 aa).

Positions 1 to 47 (MNPSEMQRKAPPRRRRHRNRAPLTHKMNKMVTSEEQMKLPSTKKAEP) are disordered. Positions 1–89 (MNPSEMQRKA…ALMIVSMVVS (89 aa)) are cleaved as a signal peptide. A compositionally biased stretch (basic residues) spans 10–20 (APPRRRRHRNR). At 90-632 (LPMPAGAAAA…NLNPVTWVKT (543 aa)) the chain is on the extracellular side. Residues Asn100, Asn128, Asn153, Asn274, Asn355, Asn372, and Asn461 are each glycosylated (N-linked (GlcNAc...) asparagine). Residues 466 to 486 (FIFTLIAVIMGLIAVTATAAV) are fusion peptide. Residues Asn507, Asn554, Asn566, and Asn585 are each glycosylated (N-linked (GlcNAc...) asparagine). A helical membrane pass occupies residues 633–653 (IGSTTIINLILILVCLFCLLL). At 654-699 (VCRCTQQLRRDSDHRERAMMTMAVLSKRKGGNVGKSKRDQIVTVSV) the chain is on the cytoplasmic side.

This sequence belongs to the beta type-B retroviral envelope protein family. HERV class-II K(HML-2) env subfamily. As to quaternary structure, the surface (SU) and transmembrane (TM) proteins form a heterodimer. SU and TM are attached by noncovalent interactions or by a labile interchain disulfide bond. Post-translationally, specific enzymatic cleavages in vivo yield the mature SU and TM proteins.

Its subcellular location is the cell membrane. The protein resides in the virion. Its function is as follows. Retroviral envelope proteins mediate receptor recognition and membrane fusion during early infection. Endogenous envelope proteins may have kept, lost or modified their original function during evolution. This endogenous envelope protein has lost its original fusogenic properties. Functionally, SU mediates receptor recognition. In terms of biological role, TM anchors the envelope heterodimer to the viral membrane through one transmembrane domain. The other hydrophobic domain, called fusion peptide, mediates fusion of the viral membrane with the target cell membrane. The chain is Endogenous retrovirus group K member 113 Env polyprotein (HERVK_113) from Homo sapiens (Human).